Here is a 310-residue protein sequence, read N- to C-terminus: MPVSTTLLQSDLPGLPLRHRGKVRDVFDIPRDRLPADAPPGDYLLMVATDRLSAFDVVLPDPIPGKGEMLCQVSNFWFHKTEHLMPNHLVDIRVEQVLPEGVDPALYAKRAVVTRKLKPVPVEAIARGYVIGSGWKDYQRTGKISGIELPDGLRQAEKLPEPIFTPSTKAAVGDHDENIDFDAMVKTVGAELAERVRDATLRIYRFAADFAAERGILLADTKFEFGTDADGRLYIMDEMLTPDSSRYWPADQYEPGTSPPSYDKQFVRDYLETLDWGKTAPGPRLPADVIDRTRAKYAEALQRLAGISVD.

The protein belongs to the SAICAR synthetase family.

The enzyme catalyses 5-amino-1-(5-phospho-D-ribosyl)imidazole-4-carboxylate + L-aspartate + ATP = (2S)-2-[5-amino-1-(5-phospho-beta-D-ribosyl)imidazole-4-carboxamido]succinate + ADP + phosphate + 2 H(+). It participates in purine metabolism; IMP biosynthesis via de novo pathway; 5-amino-1-(5-phospho-D-ribosyl)imidazole-4-carboxamide from 5-amino-1-(5-phospho-D-ribosyl)imidazole-4-carboxylate: step 1/2. The chain is Phosphoribosylaminoimidazole-succinocarboxamide synthase from Xanthomonas axonopodis pv. citri (strain 306).